Reading from the N-terminus, the 37-residue chain is 24 kDa antigen (37 aa).

In Plasmodium chabaudi, this protein is 24 kDa antigen.